We begin with the raw amino-acid sequence, 640 residues long: MSIRKQARLEAKQFIDSLTVQPFPNSQKVYVQGSRADIQVPMREISLADSLVGGSKKAPILEPNEPIRVYDTSGFYTDPNQPVNIYDGLEKVRSGWIEERGDTVLLEQSNSVYTKERLSDETLDELRFDARIQARQAVEGHCVTQLHYARKGIVTPEMEYIAIRENMGRAKYADEELNQQHPGINFGANLPPEITPEFVRKEVAEGRAIIPANINHPESEPMIIGRNFLVKVNANIGNSAVSSSIEEEVEKLVWSIRWGGDTVMDLSTGRNIHETREWIIRNSPVPIGTVPMYQALEKVNGVAENLNWDVFRDTLLEQAEQGVDYFTIHAGVLLRYVPMTAKRVTGIVSRGGSIMAKWCLAHHEESFLYMHFREICEICAQYDISLSLGDGLRPGSVADANDEAQFSELRTLGELTKIAWEYDVQVMIEGPGHVPMHMIKENMDEQLKHCHEAPFYTLGPLTTDIAPGYDHITSGIGAAIIGWYGCAMLCYVTPKEHLGLPNKDDVKVGLITYKLCAHAADLAKGHPGAQVRDNALSKARFEFRWEDQFNLGLDPDTARAYHDETLPQESGKVAHFCSMCGPKFCSMKISQEVRDYAKGLEENGDIAIKLLDNPLEGMQQKSDEFRSRGSELYHPVQEEI.

Substrate is bound by residues Asn-235, Met-264, Tyr-293, His-329, Ser-349–Gly-351, Asp-390–Arg-393, and Glu-429. Residue His-433 coordinates Zn(2+). A substrate-binding site is contributed by Tyr-456. Residue His-497 participates in Zn(2+) binding. [4Fe-4S] cluster contacts are provided by Cys-577, Cys-580, and Cys-585.

It belongs to the ThiC family. In terms of assembly, homodimer. [4Fe-4S] cluster serves as cofactor.

The catalysed reaction is 5-amino-1-(5-phospho-beta-D-ribosyl)imidazole + S-adenosyl-L-methionine = 4-amino-2-methyl-5-(phosphooxymethyl)pyrimidine + CO + 5'-deoxyadenosine + formate + L-methionine + 3 H(+). The protein operates within cofactor biosynthesis; thiamine diphosphate biosynthesis. In terms of biological role, catalyzes the synthesis of the hydroxymethylpyrimidine phosphate (HMP-P) moiety of thiamine from aminoimidazole ribotide (AIR) in a radical S-adenosyl-L-methionine (SAM)-dependent reaction. This chain is Phosphomethylpyrimidine synthase, found in Photobacterium profundum (strain SS9).